The sequence spans 493 residues: Protein nucleotidyltransferase YdiU (493 aa).

ATP contacts are provided by Gly81, Gly83, Arg84, Lys103, Asp115, Gly116, Arg166, and Arg173. Residue Asp244 is the Proton acceptor of the active site. Positions 245 and 254 each coordinate Mg(2+). Asp254 lines the ATP pocket.

This sequence belongs to the SELO family. It depends on Mg(2+) as a cofactor. The cofactor is Mn(2+).

The enzyme catalyses L-seryl-[protein] + ATP = 3-O-(5'-adenylyl)-L-seryl-[protein] + diphosphate. It catalyses the reaction L-threonyl-[protein] + ATP = 3-O-(5'-adenylyl)-L-threonyl-[protein] + diphosphate. It carries out the reaction L-tyrosyl-[protein] + ATP = O-(5'-adenylyl)-L-tyrosyl-[protein] + diphosphate. The catalysed reaction is L-histidyl-[protein] + UTP = N(tele)-(5'-uridylyl)-L-histidyl-[protein] + diphosphate. The enzyme catalyses L-seryl-[protein] + UTP = O-(5'-uridylyl)-L-seryl-[protein] + diphosphate. It catalyses the reaction L-tyrosyl-[protein] + UTP = O-(5'-uridylyl)-L-tyrosyl-[protein] + diphosphate. In terms of biological role, nucleotidyltransferase involved in the post-translational modification of proteins. It can catalyze the addition of adenosine monophosphate (AMP) or uridine monophosphate (UMP) to a protein, resulting in modifications known as AMPylation and UMPylation. This is Protein nucleotidyltransferase YdiU from Shewanella frigidimarina (strain NCIMB 400).